Reading from the N-terminus, the 575-residue chain is Acyloxyacyl hydrolase (575 aa).

An N-terminal signal peptide occupies residues 1 to 25; the sequence is MKSPWRILVVSPLLLLPLHSSTSRA. The propeptide occupies 26–34; it reads HDNQPGTIR. The 82-residue stretch at 36–117 folds into the Saposin B-type domain; it reads DHYTCVGCVL…HTLEFCKQEP (82 aa). The interval 37–69 is important for enzyme activity, localization to cytoplasmic vesicles, and protein stability; it reads HYTCVGCVLVVSVIEQLAQVHNSTVQASMERLC. Cystine bridges form between C40–C113, C43–C107, C69–C82, C122–C453, C159–C168, C205–C229, C248–C328, and C375–C459. An N-linked (GlcNAc...) asparagine glycan is attached at N58. Residues 172 to 176 are lipopolysaccharide binding; the sequence is KLAIK. Ca(2+) is bound by residues D183, D185, D187, Y189, D204, N206, D207, D209, V212, D222, D226, N228, N230, I232, and E244. The N-linked (GlcNAc...) asparagine glycan is linked to N206. Residue S262 is part of the active site. N466 carries an N-linked (GlcNAc...) asparagine glycan.

As to quaternary structure, heterodimer of the large and small subunits; disulfide-linked. Ca(2+) is required as a cofactor. Cleaved into a large and a small subunit. In terms of processing, the small subunit is N-glycosylated.

The protein localises to the secreted. The protein resides in the cytoplasmic vesicle. It carries out the reaction a 3-(acyloxy)acyl derivative of bacterial toxin + H2O = a 3-hydroxyacyl derivative of bacterial toxin + a fatty acid + H(+). Its function is as follows. Removes the secondary (acyloxyacyl-linked) fatty acyl chains from the lipid A region of bacterial lipopolysaccharides (LPS). By breaking down LPS, terminates the host response to bacterial infection and prevents prolonged and damaging inflammatory responses. In peritoneal macrophages, seems to be important for recovery from a state of immune tolerance following infection by Gram-negative bacteria. This is Acyloxyacyl hydrolase from Oryctolagus cuniculus (Rabbit).